Consider the following 592-residue polypeptide: MWMFLKLLLFVCSSWWSCAQASNCNATSPYRTLDGTCNNLQNPNWGAANTAYGRLIAADYGDGVKSPRKAASGADLPSARLLSMKLFGDEHVLEPAFTLLSMQFGQLVAHDMGFTSGSTDILPCCSEGKPVSNPVPRCYPIPVASDDPVMGSAGVQCLDFLRTITDCDADPSSCSNSKKAEQLNIATSFIDLSVVYGNSVEENTPIREFTGGLMKVETRDGSDWPPRNPNASTACVQRSPEDACYLTGDARANISPQMAILHILFLREHNRIAKQLAALHPEWNDEKLFQEARRINIAQYQQIVFYEWLPSFLPLPDNGGKRSLSSVLDHQYRADVNPTTLNSNAHAAFRYFHSAILGHLHLDYENRTKAGEISFTDHTLNPAILEAPCKYAQLSRGMATQSMGRIDLNIDHELKHNLFKFNAPFGNDLRAIDIQRARDHGLPSYNSFREKCGLPKAASFDDFTSLLHSPQDAARLASVYASVDDVELTVAGLFEKHIPGTQVGATFRCILLEQFHRTRVGDRFFFETSDPIVGFSREQFKQLRKANIARLLCDNTPKLEGMQSKAFAAIDAGSNKVLPCSSLPAVDLDPWK.

An N-terminal signal peptide occupies residues Met-1–Ala-21. An intrachain disulfide couples Cys-24 to Cys-37. N-linked (GlcNAc...) asparagine glycosylation occurs at Asn-25. The Proton acceptor role is filled by His-110. Residues Asp-111, Thr-187, Phe-189, Asp-191, and Ser-193 each coordinate Ca(2+). N-linked (GlcNAc...) asparagine glycosylation is present at Asn-230. A disulfide bridge connects residues Cys-235 and Cys-244. Position 353 (His-353) interacts with heme b. Asn-366 carries an N-linked (GlcNAc...) asparagine glycan. Intrachain disulfides connect Cys-452/Cys-509 and Cys-553/Cys-580.

Belongs to the peroxidase family. XPO subfamily. In terms of tissue distribution, female salivary gland.

It localises to the secreted. It carries out the reaction 2 catechol + O2 = 2 1,2-benzoquinone + 2 H2O. Inhibits noradrenaline-induced smooth muscle contraction in the host, probably due to the oxidation of noradrenaline, resulting in vasodilation. Exhibits peroxidase activity. This chain is Salivary peroxidase/catechol oxidase, found in Anopheles albimanus (New world malaria mosquito).